Here is a 221-residue protein sequence, read N- to C-terminus: Putative 5'(3')-deoxyribonucleotidase R824 (221 aa).

The Mg(2+) site is built by Asp16 and Asp18. Asp18 (nucleophile) is an active-site residue. Phosphate contacts are provided by Asp18, Ser103, and Lys138. Asp149 contributes to the Mg(2+) binding site.

The protein belongs to the 5'(3')-deoxyribonucleotidase family. It depends on Mg(2+) as a cofactor.

Functionally, dephosphorylates the 5' and 2'(3')-phosphates of deoxyribonucleotides. In Acanthamoeba polyphaga mimivirus (APMV), this protein is Putative 5'(3')-deoxyribonucleotidase R824.